The following is a 310-amino-acid chain: Terpene synthase 6 (310 aa).

The DDxx(x)D/E motif motif lies at 93–98 (DDFYFE). Positions 222-230 (NDCYSFNKE) match the NDxxSxxxD/E motif motif.

It belongs to the terpene synthase family.

It catalyses the reaction (2E,6E)-farnesyl diphosphate = (E)-beta-farnesene + diphosphate. The enzyme catalyses (2E,6E)-farnesyl diphosphate = (1S,2S,4R)-beta-elemene + diphosphate. The catalysed reaction is (2E,6E)-farnesyl diphosphate = (3E,6E)-alpha-farnesene + diphosphate. Its function is as follows. Terpene synthase that converts its substrate farnesyl diphosphate (FPP) into the sesquiterpenes beta-elemene, (E)-beta-farnesene and (E,E)-alpha-farnesene. This chain is Terpene synthase 6, found in Dictyostelium purpureum (Slime mold).